The chain runs to 146 residues: MKLHELKPAAGSRKAPKRVGRGTGSGLGRNAGKGEKGQNARSGGGVRPGFEGGQMPLYRRLPKRGFTNIFAKTITAVNVDRLNIFEDGTEVTIDALIEKGIIKKVNDGVKILGNGELKKKLVVKVNKYSKSAAEKIEAAGGKAEVI.

The segment at 1–54 is disordered; that stretch reads MKLHELKPAAGSRKAPKRVGRGTGSGLGRNAGKGEKGQNARSGGGVRPGFEGGQ. Gly residues-rich tracts occupy residues 21-31 and 42-52; these read RGTGSGLGRNA and SGGGVRPGFEG.

Belongs to the universal ribosomal protein uL15 family. Part of the 50S ribosomal subunit.

In terms of biological role, binds to the 23S rRNA. This chain is Large ribosomal subunit protein uL15, found in Clostridium acetobutylicum (strain ATCC 824 / DSM 792 / JCM 1419 / IAM 19013 / LMG 5710 / NBRC 13948 / NRRL B-527 / VKM B-1787 / 2291 / W).